Reading from the N-terminus, the 320-residue chain is o-succinylbenzoate synthase (320 aa).

The active-site Proton donor is the K133. 3 residues coordinate Mg(2+): D161, E190, and D213. The active-site Proton acceptor is the K235.

The protein belongs to the mandelate racemase/muconate lactonizing enzyme family. MenC type 1 subfamily. The cofactor is a divalent metal cation.

The catalysed reaction is (1R,6R)-6-hydroxy-2-succinyl-cyclohexa-2,4-diene-1-carboxylate = 2-succinylbenzoate + H2O. Its pathway is quinol/quinone metabolism; 1,4-dihydroxy-2-naphthoate biosynthesis; 1,4-dihydroxy-2-naphthoate from chorismate: step 4/7. It functions in the pathway quinol/quinone metabolism; menaquinone biosynthesis. Its function is as follows. Converts 2-succinyl-6-hydroxy-2,4-cyclohexadiene-1-carboxylate (SHCHC) to 2-succinylbenzoate (OSB). This is o-succinylbenzoate synthase from Escherichia coli O45:K1 (strain S88 / ExPEC).